Here is a 166-residue protein sequence, read N- to C-terminus: NAD(P)H-quinone oxidoreductase subunit I, chloroplastic (166 aa).

2 4Fe-4S ferredoxin-type domains span residues 55–84 (GRIH…VDWK) and 95–124 (LNYS…MTEE). The [4Fe-4S] cluster site is built by cysteine 64, cysteine 67, cysteine 70, cysteine 74, cysteine 104, cysteine 107, cysteine 110, and cysteine 114.

The protein belongs to the complex I 23 kDa subunit family. In terms of assembly, NDH is composed of at least 16 different subunits, 5 of which are encoded in the nucleus. It depends on [4Fe-4S] cluster as a cofactor.

It localises to the plastid. Its subcellular location is the chloroplast thylakoid membrane. It catalyses the reaction a plastoquinone + NADH + (n+1) H(+)(in) = a plastoquinol + NAD(+) + n H(+)(out). The catalysed reaction is a plastoquinone + NADPH + (n+1) H(+)(in) = a plastoquinol + NADP(+) + n H(+)(out). NDH shuttles electrons from NAD(P)H:plastoquinone, via FMN and iron-sulfur (Fe-S) centers, to quinones in the photosynthetic chain and possibly in a chloroplast respiratory chain. The immediate electron acceptor for the enzyme in this species is believed to be plastoquinone. Couples the redox reaction to proton translocation, and thus conserves the redox energy in a proton gradient. The sequence is that of NAD(P)H-quinone oxidoreductase subunit I, chloroplastic from Steiractinia sodiroi.